A 412-amino-acid polypeptide reads, in one-letter code: Acetate kinase (412 aa).

Position 10 (N10) interacts with Mg(2+). K17 is a binding site for ATP. The interval 40–61 is disordered; sequence ETSRLAHTPSAGGGAEPRERTG. Residue R95 coordinates substrate. D152 functions as the Proton donor/acceptor in the catalytic mechanism. ATP is bound by residues 212 to 216, 286 to 288, and 334 to 338; these read HLGNG, DMR, and GVGEN. E388 provides a ligand contact to Mg(2+).

This sequence belongs to the acetokinase family. Homodimer. The cofactor is Mg(2+). Mn(2+) is required as a cofactor.

Its subcellular location is the cytoplasm. The enzyme catalyses acetate + ATP = acetyl phosphate + ADP. It participates in metabolic intermediate biosynthesis; acetyl-CoA biosynthesis; acetyl-CoA from acetate: step 1/2. Catalyzes the formation of acetyl phosphate from acetate and ATP. Can also catalyze the reverse reaction. This is Acetate kinase from Streptomyces griseus subsp. griseus (strain JCM 4626 / CBS 651.72 / NBRC 13350 / KCC S-0626 / ISP 5235).